We begin with the raw amino-acid sequence, 520 residues long: Fusaridione A cluster transcription factor fsdR (520 aa).

A disordered region spans residues M1–K30.

It is found in the nucleus. Functionally, transcription factor that regulates the expression of the gene cluster that mediates the biosynthesis of fusaridione A. The sequence is that of Fusaridione A cluster transcription factor fsdR from Fusarium heterosporum.